A 204-amino-acid polypeptide reads, in one-letter code: Small ribosomal subunit protein uS4 (204 aa).

The S4 RNA-binding domain maps to 92 to 153 (RRLDALVLRS…RSKEKTLFTI (62 aa)).

The protein belongs to the universal ribosomal protein uS4 family. As to quaternary structure, part of the 30S ribosomal subunit. Contacts protein S5. The interaction surface between S4 and S5 is involved in control of translational fidelity.

Its function is as follows. One of the primary rRNA binding proteins, it binds directly to 16S rRNA where it nucleates assembly of the body of the 30S subunit. Functionally, with S5 and S12 plays an important role in translational accuracy. The protein is Small ribosomal subunit protein uS4 of Streptomyces coelicolor (strain ATCC BAA-471 / A3(2) / M145).